We begin with the raw amino-acid sequence, 323 residues long: tRNA N6-adenosine threonylcarbamoyltransferase (323 aa).

Fe cation is bound by residues H106, H110, and Y127. Residues 127-131 (YVSGA), D159, G172, E176, and N255 contribute to the substrate site. Position 283 (D283) interacts with Fe cation.

The protein belongs to the KAE1 / TsaD family. As to quaternary structure, monomer. Component of the KEOPS complex that consists of Kae1, Bud32, Cgi121 and Pcc1; the whole complex dimerizes. Fe(2+) serves as cofactor.

It is found in the cytoplasm. The catalysed reaction is L-threonylcarbamoyladenylate + adenosine(37) in tRNA = N(6)-L-threonylcarbamoyladenosine(37) in tRNA + AMP + H(+). Its function is as follows. Required for the formation of a threonylcarbamoyl group on adenosine at position 37 (t(6)A37) in tRNAs that read codons beginning with adenine. Is a component of the KEOPS complex that is probably involved in the transfer of the threonylcarbamoyl moiety of threonylcarbamoyl-AMP (TC-AMP) to the N6 group of A37. Kae1 likely plays a direct catalytic role in this reaction, but requires other protein(s) of the complex to fulfill this activity. The chain is tRNA N6-adenosine threonylcarbamoyltransferase from Methanocella arvoryzae (strain DSM 22066 / NBRC 105507 / MRE50).